We begin with the raw amino-acid sequence, 623 residues long: MSKLEQYFDYVKINLASPQRIKKWGERRLPNGQVVGEVTKPETINYRTLKPEMDGLFCERIFGPVKDWECHCGKYKRVRYKGIVCERCGVEVAESKVRRHRMGYIELAAPVTHVWYLKSLPSYISILLDIPLKDVEQVVYFNSYVVTKPGNCTNLRYKQLLSEDEWIAIEDQLYQEDSELTGVEVGIGAEAIQKLLRDIDLEVEAESLREEILVVKGIKKDKSIKRLRVIDNFIATRSDPTWMILTVLPVIPPDLRPMVQLDGGRFATSDLNDLYRRVLNRNNRLIRLQEILAPEIIIRNEKRMLQESVDALIDNGRRGRTVMGANNRPLKSLSDIIEGKQGRFRQNLLGKRVDYSGRSVIVVGPQLELNQCGLPREMALELFQPFVIHKLIQQGLVNNIKAAKRLIQKNELIVWNVLEEVIQGHPILLNRAPTLHRLGIQAFEPILVEGRAIKLHPLVCPAFNADFDGDQMAVHIPLSLEAQAEARMLMLAPYNFLSPATGDPIIMPSQDMVLGCYYLTAENPSQQVNRSLYFSNFDDVLLAYETKLIKLHSYVWVRFNGNVDDDDEKIEEKKLDGNKKLHIYPSRIKKLDQDNNLMVQYILTTPGRILLNNVLFDSLQLQF.

Zn(2+) is bound by residues Cys70, Cys72, Cys85, and Cys88. 3 residues coordinate Mg(2+): Asp466, Asp468, and Asp470.

It belongs to the RNA polymerase beta' chain family. RpoC1 subfamily. In terms of assembly, in plastids the minimal PEP RNA polymerase catalytic core is composed of four subunits: alpha, beta, beta', and beta''. When a (nuclear-encoded) sigma factor is associated with the core the holoenzyme is formed, which can initiate transcription. Mg(2+) serves as cofactor. It depends on Zn(2+) as a cofactor.

It localises to the plastid. Its subcellular location is the chloroplast. The catalysed reaction is RNA(n) + a ribonucleoside 5'-triphosphate = RNA(n+1) + diphosphate. Functionally, DNA-dependent RNA polymerase catalyzes the transcription of DNA into RNA using the four ribonucleoside triphosphates as substrates. This chain is DNA-directed RNA polymerase subunit beta', found in Guillardia theta (Cryptophyte).